We begin with the raw amino-acid sequence, 317 residues long: Pantothenate kinase (317 aa).

Position 99-106 (99-106) interacts with ATP; it reads GSVSVGKS.

The protein belongs to the prokaryotic pantothenate kinase family.

The protein resides in the cytoplasm. It carries out the reaction (R)-pantothenate + ATP = (R)-4'-phosphopantothenate + ADP + H(+). It participates in cofactor biosynthesis; coenzyme A biosynthesis; CoA from (R)-pantothenate: step 1/5. In Histophilus somni (strain 129Pt) (Haemophilus somnus), this protein is Pantothenate kinase.